The primary structure comprises 229 residues: Stage III sporulation protein AG (229 aa).

Residues 30–50 (YHYFLFVFVLGVSFMLVSQLF) traverse the membrane as a helical segment. 2 disordered regions span residues 64–93 (AVSSQHSADSKEKTAEVFKASKSDKPKDSI) and 136–159 (SNKNTTTEETDKEGGKRSVTDQSS). Residues 71–93 (ADSKEKTAEVFKASKSDKPKDSI) show a composition bias toward basic and acidic residues.

It is found in the cell membrane. This Bacillus subtilis (strain 168) protein is Stage III sporulation protein AG (spoIIIAG).